We begin with the raw amino-acid sequence, 592 residues long: Elongation factor 1 alpha-like protein (592 aa).

2 disordered regions span residues Met-1–Arg-35 and Ser-78–Pro-159. A compositionally biased stretch (acidic residues) spans Leu-12–Glu-32. The segment covering Gly-82–Leu-111 has biased composition (basic and acidic residues). Over residues Glu-113 to Asn-124 the composition is skewed to polar residues. Residues Val-137–Lys-151 show a composition bias toward basic and acidic residues. Positions Lys-175–Tyr-401 constitute a tr-type G domain. Positions Gly-184 to Ser-191 are G1. Gly-184–Ser-191 provides a ligand contact to GTP. Residues Gly-240–Asp-244 form a G2 region. The segment at Asp-261–Gly-264 is G3. Residues Asn-323–Asp-326 and Phe-352–Ser-355 contribute to the GTP site. Residues Asn-323–Asp-326 form a G4 region. Residues Ser-363–Ile-365 form a G5 region.

This sequence belongs to the TRAFAC class translation factor GTPase superfamily. Classic translation factor GTPase family. As to quaternary structure, component of the Dom34-Hbs1 complex, also named Pelota-HBS1L complex, composed of dom34 and hbs1.

It is found in the cytoplasm. The enzyme catalyses GTP + H2O = GDP + phosphate + H(+). Its function is as follows. GTPase component of the Dom34-Hbs1 complex, a complex that recognizes stalled ribosomes and triggers the No-Go Decay (NGD) pathway. The Dom34-Hbs1 complex recognizes ribosomes stalled at the 3' end of an mRNA and engages stalled ribosomes by destabilizing mRNA in the mRNA channel. Following ribosome-binding, the Pelota-HBS1L complex promotes the disassembly of stalled ribosomes, followed by degradation of damaged mRNAs as part of the NGD pathway. The sequence is that of Elongation factor 1 alpha-like protein from Schizosaccharomyces pombe (strain 972 / ATCC 24843) (Fission yeast).